The chain runs to 385 residues: Basigin (385 aa).

A signal peptide spans 1–21 (MAAALFVLLGFALLGTHGASG). In terms of domain architecture, Ig-like spans 37–120 (GGSVELHCEA…SNDPDRNHLT (84 aa)). 3 disulfides stabilise this stretch: C44-C108, C157-C203, and C242-C301. In terms of domain architecture, Ig-like C2-type spans 138 to 219 (EPGTVFTTVE…MGTANIQLHG (82 aa)). Topologically, residues 138 to 323 (EPGTVFTTVE…ITLRVRSHLA (186 aa)) are extracellular. N-linked (GlcNAc...) asparagine glycosylation is present at N160. An essential for interaction with KDR/VEGFR2 region spans residues 195-199 (DDQWG). An Ig-like V-type domain is found at 221 to 315 (PRVKAVKSSE…SKGSDQAIIT (95 aa)). Residues N268 and N302 are each glycosylated (N-linked (GlcNAc...) asparagine). Residues 324–344 (ALWPFLGIVAEVLVLVTIIFI) traverse the membrane as a helical segment. Residues 345–385 (YEKRRKPEDVLDDDDAGSAPLKSSGQHQNDKGKNVRQRNSS) are Cytoplasmic-facing. The tract at residues 353–385 (DVLDDDDAGSAPLKSSGQHQNDKGKNVRQRNSS) is disordered. S362 and S368 each carry phosphoserine.

In terms of assembly, homooligomer. Interacts with NXNL1. Interacts with SLC2A1 and SLC16A1/GLUT1. Interacts with XKR8; promoting its localization at the cell membrane. (Microbial infection) Interacts with P.falciparum (isolate 3D7) RH5/PfRH5; the interaction is required for the invasion of the host erythrocytes by the parasite at the merozoite stage. As to quaternary structure, homooligomer. Forms heterooligomers with isoform 3. Interacts with VEGFA and KDR/VEGFR2. Interacts with PPIA/CYPA. Interacts with PPIL2; regulates BSG transport to the cell membrane. Interacts with SLC16A1; interaction mediates SLC16A3 targeting to the plasma membrane. Interacts with SLC16A12. Interacts with SLC16A11. Interacts with AJAP1. Interacts with SLC1A3, ATP1B2, MAG and L1CAM. Interacts with SLC16A3; interaction mediates SLC16A3 targeting to the plasma membrane. In terms of assembly, (Microbial infection) Interacts with P.falciparum (isolates 3D7 or 7G8) RH5/PfRH5; the interaction is required for the invasion of the host erythrocytes by the parasite at the merozoite stage. (Microbial infection) Does not interact with severe acute respiratory syndrome coronavirus 2 (SARS-CoV-2) spike glycoprotein, even if previous works were based on a putative interaction. As to quaternary structure, forms heterooligomers with isoform 2. In terms of assembly, interacts with SLC16A6; this interaction mediates targeting to the plasma membrane. Post-translationally, N-glycosylated. As to expression, retina-specific. Expressed in retinal cone photoreceptors (at protein level). Expressed in erythrocytes (at protein level). Highly expressed in melanoma cell lines (at protein level). Highly expressed in the heart, kidney, skeletal muscle and testis. In terms of tissue distribution, highly expressed in the bone marrow, fetal liver, lung, testis and thymus.

The protein resides in the melanosome. It localises to the cell membrane. The protein localises to the photoreceptor inner segment. It is found in the cell projection. Its subcellular location is the cilium. The protein resides in the photoreceptor outer segment. It localises to the endosome. The protein localises to the endoplasmic reticulum membrane. It is found in the basolateral cell membrane. In terms of biological role, essential for normal retinal maturation and development. Acts as a retinal cell surface receptor for NXNL1 and plays an important role in NXNL1-mediated survival of retinal cone photoreceptors. In association with glucose transporter SLC16A1/GLUT1 and NXNL1, promotes retinal cone survival by enhancing aerobic glycolysis and accelerating the entry of glucose into photoreceptors. May act as a potent stimulator of IL6 secretion in multiple cell lines that include monocytes. Functionally, (Microbial infection) Erythrocyte receptor for P.falciparum RH5 which is essential for erythrocyte invasion by the merozoite stage of P.falciparum isolates 3D7 and Dd2. Its function is as follows. Signaling receptor for cyclophilins, essential for PPIA/CYPA and PPIB/CYPB-dependent signaling related to chemotaxis and adhesion of immune cells. Plays an important role in targeting monocarboxylate transporters SLC16A1/GLUT1, SLC16A11 and SLC16A12 to the plasma membrane. Acts as a coreceptor for vascular endothelial growth factor receptor 2 (KDR/VEGFR2) in endothelial cells enhancing its VEGFA-mediated activation and downstream signaling. Promotes angiogenesis through EPAS1/HIF2A-mediated up-regulation of VEGFA (isoform VEGF-165 and VEGF-121) and KDR/VEGFR2 in endothelial cells. Plays a key role in regulating tumor growth, invasion, metastasis and neoangiogenesis by stimulating the production and release of extracellular matrix metalloproteinases and KDR/VEGFR2 by both tumor cells and stromal cells (fibroblasts and endothelial cells). (Microbial infection) Erythrocyte receptor for P.falciparum RH5 which is essential for erythrocyte invasion by the merozoite stage of P.falciparum isolates 3D7, Dd2, 7G8 and HB3. Binding of P.falciparum RH5 results in BSG dimerization which triggers an increase in intracellular Ca(2+) in the erythrocyte. This essential step leads to a rearrangement of the erythrocyte cytoskeleton required for the merozoite invasion. In terms of biological role, (Microbial infection) Can facilitate human SARS coronavirus (SARS-CoV-1) infection via its interaction with virus-associated PPIA/CYPA. Functionally, (Microbial infection) Can facilitate HIV-1 infection via its interaction with virus-associated PPIA/CYPA. Its function is as follows. (Microbial infection) First described as a receptor for severe acute respiratory syndrome coronavirus 2 (SARS-CoV-2), it is not required for SARS-CoV-2 infection. (Microbial infection) Acts as a receptor for measles virus. In terms of biological role, (Microbial infection) Promotes entry of pentamer-expressing human cytomegalovirus (HCMV) into epithelial and endothelial cells. This chain is Basigin, found in Homo sapiens (Human).